The sequence spans 581 residues: Ketol-acid reductoisomerase, chloroplastic (581 aa).

The transit peptide at 1–50 (MAAVTSSCSTAISASSKTLAKPVAASFAPTNLSFSKLSPQSIRARRSITV) directs the protein to the chloroplast. One can recognise a KARI N-terminal Rossmann domain in the interval 92–290 (VRGGRDLFHL…ALGSPFTFAT (199 aa)). NADP(+)-binding positions include 113 to 120 (GVIGWGSQ), 146 to 151 (RKGSSS), and 185 to 189 (SDSAQ). H210 is a catalytic residue. KARI C-terminal knotted domains follow at residues 291-439 (TLEQ…RPAG) and 440-576 (DLGP…RPEL). Positions 299, 303, 476, and 480 each coordinate Mg(2+). Position 502 (S502) interacts with substrate.

This sequence belongs to the ketol-acid reductoisomerase family. Homodimer. Requires Mg(2+) as cofactor.

It localises to the plastid. The protein localises to the chloroplast. It catalyses the reaction (2R)-2,3-dihydroxy-3-methylbutanoate + NADP(+) = (2S)-2-acetolactate + NADPH + H(+). It carries out the reaction (2R,3R)-2,3-dihydroxy-3-methylpentanoate + NADP(+) = (S)-2-ethyl-2-hydroxy-3-oxobutanoate + NADPH + H(+). It participates in amino-acid biosynthesis; L-isoleucine biosynthesis; L-isoleucine from 2-oxobutanoate: step 2/4. Its pathway is amino-acid biosynthesis; L-valine biosynthesis; L-valine from pyruvate: step 2/4. In Pisum sativum (Garden pea), this protein is Ketol-acid reductoisomerase, chloroplastic (PGAAIR).